Here is a 143-residue protein sequence, read N- to C-terminus: Nucleoside diphosphate kinase (143 aa).

Residues Lys-11, Phe-59, Arg-87, Thr-93, Arg-104, and Asn-114 each contribute to the ATP site. His-117 (pros-phosphohistidine intermediate) is an active-site residue.

It belongs to the NDK family. As to quaternary structure, homotetramer. The cofactor is Mg(2+).

Its subcellular location is the cytoplasm. The catalysed reaction is a 2'-deoxyribonucleoside 5'-diphosphate + ATP = a 2'-deoxyribonucleoside 5'-triphosphate + ADP. The enzyme catalyses a ribonucleoside 5'-diphosphate + ATP = a ribonucleoside 5'-triphosphate + ADP. Its function is as follows. Major role in the synthesis of nucleoside triphosphates other than ATP. The ATP gamma phosphate is transferred to the NDP beta phosphate via a ping-pong mechanism, using a phosphorylated active-site intermediate. The polypeptide is Nucleoside diphosphate kinase (Acinetobacter baylyi (strain ATCC 33305 / BD413 / ADP1)).